Reading from the N-terminus, the 474-residue chain is MVQLNPNFINTISQELPAHLSMDEFIAACARPLRRSIRVNTLKISSEDFKRLMQPKGWTFEPIPWCKDGFWISYDEEEQLGNALEHIQGLFYIQEASSMLPPTALFTPNADWQCVLDLAAAPGSKTTQMAALMNNQGLLVANEYSASRVKVLHANVLRMGASHCALTHFDGRVFGEYLYESFDAVLIDAPCGGEGTVRKDVDALKSWSLDEVIAISETQKALIESAFLALKPGGSLVYSTCTLNRHENQGVCEYLQQTYGNAVQFESLSQLFDGADKATTPEGFLHVWPQIYDSEGFFVAKLTKTRSVPRLQLEPKLQKNFPFTEASPKQAKAIQAYFADDLGIELPDELIMVRDDEFWLFPREFTDFIGKMRFQRIGLKLADHSKHGFKVRHEAVIALANTQANIIEINDEQAKEYLMGRDIALDTATKAQGEIIVCYGGAPLGMAKHLGNKLKNNLPRDLVKDKVLLLPSQA.

S-adenosyl-L-methionine-binding positions include 119-125 (AAAPGSK), E143, D170, and D188. The Nucleophile role is filled by C241.

Belongs to the class I-like SAM-binding methyltransferase superfamily. RsmB/NOP family.

The protein resides in the cytoplasm. The enzyme catalyses cytidine(1407) in 16S rRNA + S-adenosyl-L-methionine = 5-methylcytidine(1407) in 16S rRNA + S-adenosyl-L-homocysteine + H(+). Specifically methylates the cytosine at position 1407 (m5C1407) of 16S rRNA. The polypeptide is Ribosomal RNA small subunit methyltransferase F (Shewanella oneidensis (strain ATCC 700550 / JCM 31522 / CIP 106686 / LMG 19005 / NCIMB 14063 / MR-1)).